The sequence spans 243 residues: tRNA pseudouridine synthase C (243 aa).

D55 is a catalytic residue.

It belongs to the pseudouridine synthase RluA family.

It carries out the reaction uridine(65) in tRNA = pseudouridine(65) in tRNA. Functionally, responsible for synthesis of pseudouridine from uracil-65 in transfer RNAs. In Pasteurella multocida (strain Pm70), this protein is tRNA pseudouridine synthase C (truC).